The following is a 356-amino-acid chain: Protein translocase subunit SecY (356 aa).

8 helical membrane passes run 24 to 44, 77 to 97, 125 to 145, 154 to 174, 183 to 203, 217 to 237, 274 to 294, and 317 to 337; these read LFVI…IPGI, IFAL…LLTV, LVLA…MPGM, FAFY…LMWL, IGNG…PPAV, FLLL…VVFI, VIPA…ASWF, and YVLL…ALVF.

It belongs to the SecY/SEC61-alpha family. In terms of assembly, component of the Sec protein translocase complex. Heterotrimer consisting of SecY, SecE and SecG subunits. The heterotrimers can form oligomers, although 1 heterotrimer is thought to be able to translocate proteins. Interacts with the ribosome. Interacts with SecDF, and other proteins may be involved. Interacts with SecA.

Its subcellular location is the cell membrane. Functionally, the central subunit of the protein translocation channel SecYEG. Consists of two halves formed by TMs 1-5 and 6-10. These two domains form a lateral gate at the front which open onto the bilayer between TMs 2 and 7, and are clamped together by SecE at the back. The channel is closed by both a pore ring composed of hydrophobic SecY resides and a short helix (helix 2A) on the extracellular side of the membrane which forms a plug. The plug probably moves laterally to allow the channel to open. The ring and the pore may move independently. In Buchnera aphidicola subsp. Acyrthosiphon kondoi (Acyrthosiphon kondoi symbiotic bacterium), this protein is Protein translocase subunit SecY.